We begin with the raw amino-acid sequence, 440 residues long: tRNA(Ile)-lysidine synthase (440 aa).

25–30 (SGGVDS) is an ATP binding site.

This sequence belongs to the tRNA(Ile)-lysidine synthase family.

The protein localises to the cytoplasm. The catalysed reaction is cytidine(34) in tRNA(Ile2) + L-lysine + ATP = lysidine(34) in tRNA(Ile2) + AMP + diphosphate + H(+). Ligates lysine onto the cytidine present at position 34 of the AUA codon-specific tRNA(Ile) that contains the anticodon CAU, in an ATP-dependent manner. Cytidine is converted to lysidine, thus changing the amino acid specificity of the tRNA from methionine to isoleucine. The polypeptide is tRNA(Ile)-lysidine synthase (Vibrio cholerae serotype O1 (strain ATCC 39315 / El Tor Inaba N16961)).